A 204-amino-acid polypeptide reads, in one-letter code: LexA repressor (204 aa).

The H-T-H motif DNA-binding region spans 27–47 (VREIGEAVGLASSSTVHGHLA). Active-site for autocatalytic cleavage activity residues include S126 and K164.

The protein belongs to the peptidase S24 family. Homodimer.

The catalysed reaction is Hydrolysis of Ala-|-Gly bond in repressor LexA.. Functionally, represses a number of genes involved in the response to DNA damage (SOS response), including recA and lexA. In the presence of single-stranded DNA, RecA interacts with LexA causing an autocatalytic cleavage which disrupts the DNA-binding part of LexA, leading to derepression of the SOS regulon and eventually DNA repair. The protein is LexA repressor of Listeria monocytogenes serotype 4b (strain CLIP80459).